The primary structure comprises 110 residues: Cytochrome c oxidase subunit 4B (110 aa).

The next 3 membrane-spanning stretches (helical) occupy residues 27 to 47, 50 to 70, and 88 to 108; these read YQVLSFGLMIGLTIVAFLTVA, GVGSWFTIPFIILLAAIQVIF, and LFLYSGVFVAFITVLAFVTII.

Belongs to the cytochrome c oxidase bacterial subunit 4 family.

It is found in the cell membrane. It carries out the reaction 4 Fe(II)-[cytochrome c] + O2 + 8 H(+)(in) = 4 Fe(III)-[cytochrome c] + 2 H2O + 4 H(+)(out). In Bacillus subtilis (strain 168), this protein is Cytochrome c oxidase subunit 4B (ctaF).